The sequence spans 754 residues: MFHSEYEKKLRSPSKSPGSKTNYYNNYSNNNNNTPIPLPLSIFHSTYEDNGSNNNNNNNNNNINLNSNNNNNNSNNSGSNINNNITTPIKSTSTTTTTTTTPITTPTTTTTTTTTTPSYDSYGDRFIPLSIGLESQNNYSFDESSYEYLYCYPSENSYTIDKQRDESHLAYNIVLKNELLGSSLSSNFFDSPSSIYKSSIFNNNNNNNNNNNNNNNNNNNNNNNNHVNNNNNNNNNNNIDTPTNNNNNNNNNNNNNNVNINDTTATTTTTTTTNTNIPTTTTNATNNNNNNSNNTTTTTTTTTNTTNTTNTNTNTNTNNNLININQSPSKKQSLMSATMNNNNSNNNNNNNFGILKYNQKQKSTMSNHLDCSPYSLSLLSDDSQKLLSSPRKPQRKISKTPIKILDAPMIKDDFYLNLIDWSSHNILAVGLDTSVYLWNATTSQVSKLCEMESGQPVSSVGWIQRGGIHLAIGGTDGVVSIWDVNKKKKIRELQGHNTRVNALAWNNHILSSGGKDKVILHHDVRDCSNNYTNRLVGHRHEICGLKWSPDGQQLASGGNDNLLNVWDHSMTQQPQQQHQPPPPPPSSNTSSISQQQQQQNTSKPLYQFKFHYAAVKAIAWSPHQRGLLASGGGTHDKCIRFWNTTTGQSIQSIDTGSQVCNLAWSKNINELVSTHGYSQNQITVWNYPTMTPVTTLTGHTMRVLYLAVSPDGQTVCTGAGDNSLRFWNLFPSNKESSFSSNLDSFYNKKGLDIR.

The span at 1 to 10 shows a compositional bias: basic and acidic residues; sequence MFHSEYEKKL. Disordered regions lie at residues 1-30, 47-116, and 200-351; these read MFHS…YSNN, YEDN…TTTT, and IFNN…NNNN. Composition is skewed to low complexity over residues 50–116 and 202–325; these read NGSN…TTTT and NNNN…ININ. A compositionally biased stretch (polar residues) spans 326–339; it reads QSPSKKQSLMSATM. The span at 340 to 351 shows a compositional bias: low complexity; it reads NNNNSNNNNNNN. WD repeat units follow at residues 411–448, 452–492, 495–532, and 537–576; these read KDDF…VSKL, ESGQ…KIRE, GHNT…NNYT, and GHRH…QPQQ. The disordered stretch occupies residues 570–598; it reads MTQQPQQQHQPPPPPPSSNTSSISQQQQQ. Residues 587-598 are compositionally biased toward low complexity; it reads SNTSSISQQQQQ. WD repeat units lie at residues 610-652, 654-695, and 698-737; these read FHYA…SIQS, DTGS…PVTT, and GHTM…KESS.

It belongs to the WD repeat CDC20/Fizzy family. In terms of assembly, the APC/C is composed of at least 13 subunits that stay tightly associated throughout the cell cycle: anapc1, anapc2, anapc3, anapc4, anapc5, anapc6, anapc7, anapc8, anapc10, anapc11, cdc20, cdc26 and cdh1.

The protein resides in the nucleus. It participates in protein modification; protein ubiquitination. Component of the anaphase promoting complex/cyclosome (APC/C), a cell cycle-regulated E3 ubiquitin-protein ligase complex that controls progression through mitosis and the G1 phase of the cell cycle. The protein is Anaphase-promoting complex subunit cdh1 (cdh1) of Dictyostelium discoideum (Social amoeba).